Here is a 515-residue protein sequence, read N- to C-terminus: Cytidine and dCMP deaminase domain-containing protein 1 (515 aa).

2 stretches are compositionally biased toward polar residues: residues 1–11 (MKEAGQMQNLE) and 18–27 (SVSTQTGSMT). Disordered stretches follow at residues 1–27 (MKEA…GSMT) and 56–83 (RQKS…STDK). Residues 60-83 (QKNEEGKHGPLGDNEEMTRVSTDK) are compositionally biased toward basic and acidic residues. A CMP/dCMP-type deaminase 1 domain is found at 71-169 (GDNEEMTRVS…SLLTEASSSE (99 aa)). Zn(2+)-binding residues include H110, C135, and C138. A Nuclear export signal motif is present at residues 272–284 (NLRQNMKDLILLL). The CMP/dCMP-type deaminase 2 domain maps to 318–483 (EIARHCMVQA…LNPSGAYGLE (166 aa)). Zn(2+) is bound at residue H399. E401 serves as the catalytic Proton donor. Residues C427 and C430 each contribute to the Zn(2+) site. Positions 489–511 (RRENGVLRPVPQKEEQHQDKKLC) match the Bipartite nuclear localization signal motif. A disordered region spans residues 494-515 (VLRPVPQKEEQHQDKKLCLGIH).

It belongs to the cytidine and deoxycytidylate deaminase family. Zn(2+) serves as cofactor.

It localises to the cytoplasm. The protein resides in the nucleus. The enzyme catalyses 2'-deoxycytidine + H2O + H(+) = 2'-deoxyuridine + NH4(+). The catalysed reaction is cytidine + H2O + H(+) = uridine + NH4(+). In terms of biological role, catalyzes the deamination of cytidine and deoxycytidine into uridine and deoxyuridine, respectively. May play an important role in testicular development and spermatogenesis. This chain is Cytidine and dCMP deaminase domain-containing protein 1 (CDADC1), found in Pongo abelii (Sumatran orangutan).